Reading from the N-terminus, the 475-residue chain is Early growth response protein 1-B (475 aa).

2 disordered regions span residues asparagine 109 to isoleucine 180 and proline 264 to alanine 285. Positions serine 111–serine 140 are enriched in low complexity. The segment covering glutamine 170–serine 179 has biased composition (polar residues). 3 C2H2-type zinc fingers span residues tyrosine 284–histidine 308, phenylalanine 314–histidine 336, and phenylalanine 342–histidine 364. Residues aspartate 355 to serine 379 are disordered. Basic residues predominate over residues arginine 359–aspartate 369.

It belongs to the EGR C2H2-type zinc-finger protein family.

Its subcellular location is the nucleus. It localises to the cytoplasm. Transcriptional regulator. Recognizes and binds to the DNA sequence 5'-GCG(T/G)GGGCG-3'(EGR-site) in the promoter region of target genes. Binds double-stranded target DNA, irrespective of the cytosine methylation status. Regulates the transcription of numerous target genes, and thereby plays an important role in regulating the response to growth factors, DNA damage, and ischemia. Plays a role in the regulation of cell survival, proliferation and cell death. Mediates responses to ischemia and hypoxia; regulates the expression of proteins that are involved in inflammatory processes. Plays a role in regulating the expression of circadian clock genes. The chain is Early growth response protein 1-B (egr1-b) from Xenopus laevis (African clawed frog).